A 633-amino-acid chain; its full sequence is Membrane protein insertase YidC (633 aa).

6 helical membrane-spanning segments follow: residues 3–23 (KNTL…SWFN), 377–397 (FIHN…IILF), 453–473 (LPML…PSAI), 499–519 (IPII…LMTI), 541–561 (GMKA…NQYA), and 562–582 (SGLT…TLIF). The disordered stretch occupies residues 612–633 (LEEAQRAQQETLRKQQEAKKKR).

Belongs to the OXA1/ALB3/YidC family. Type 1 subfamily. Interacts with the Sec translocase complex via SecD. Specifically interacts with transmembrane segments of nascent integral membrane proteins during membrane integration.

Its subcellular location is the cell inner membrane. In terms of biological role, required for the insertion and/or proper folding and/or complex formation of integral membrane proteins into the membrane. Involved in integration of membrane proteins that insert both dependently and independently of the Sec translocase complex, as well as at least some lipoproteins. Aids folding of multispanning membrane proteins. The chain is Membrane protein insertase YidC from Parabacteroides distasonis (strain ATCC 8503 / DSM 20701 / CIP 104284 / JCM 5825 / NCTC 11152).